Here is a 93-residue protein sequence, read N- to C-terminus: Large ribosomal subunit protein uL23 (93 aa).

This sequence belongs to the universal ribosomal protein uL23 family. Part of the 50S ribosomal subunit. Contacts protein L29, and trigger factor when it is bound to the ribosome.

Its function is as follows. One of the early assembly proteins it binds 23S rRNA. One of the proteins that surrounds the polypeptide exit tunnel on the outside of the ribosome. Forms the main docking site for trigger factor binding to the ribosome. In Aliarcobacter butzleri (strain RM4018) (Arcobacter butzleri), this protein is Large ribosomal subunit protein uL23.